Here is a 393-residue protein sequence, read N- to C-terminus: Envelope glycoprotein D (393 aa).

Positions 1-25 (MGRLTSGVGTAALLVVAVGLRVVCA) are cleaved as a signal peptide. The segment at 25 to 57 (AKYALADPSLKMADPNRFRGKNLPVLDQLTDPP) is interaction with TNFRSF14. Topologically, residues 26-340 (KYALADPSLK…HAPAAPSNPG (315 aa)) are virion surface. A Zn(2+)-binding site is contributed by histidine 64. Disulfide bonds link cysteine 91–cysteine 214, cysteine 131–cysteine 227, and cysteine 143–cysteine 152. N-linked (GlcNAc...) asparagine; by host glycans are attached at residues asparagine 119 and asparagine 146. Zn(2+) is bound at residue aspartate 240. A profusion region spans residues 261-305 (LKIAGWHGPKPPYTSTLLPPELSDTTNATQPELVPEDPEDSALLE). Residues 274-290 (TSTLLPPELSDTTNATQ) show a composition bias toward polar residues. The disordered stretch occupies residues 274–301 (TSTLLPPELSDTTNATQPELVPEDPEDS). N-linked (GlcNAc...) asparagine; by host glycosylation occurs at asparagine 287. A helical membrane pass occupies residues 341-361 (LIIGALAGSTLAVLVIGGIAF). The Intravirion portion of the chain corresponds to 362–393 (WVRRRAQMAPKRLRLPHIRDDDAPPSHQPLFY).

The protein belongs to the herpesviridae glycoprotein D family. As to quaternary structure, homodimer. Interacts with host receptor TNFRSF14. Interacts with host receptor NECTIN1. Interacts with host receptor NECTIN2. Interacts (via profusion domain) with gB; this interaction occurs in the absence of gH/gL. Interacts (via profusion domain) with gH/gL heterodimer; this interaction occurs in the absence of gB. Associates with the gB-gH/gL-gD complex. Interacts (via C-terminus) with UL11 tegument protein.

It is found in the virion membrane. In terms of biological role, envelope glycoprotein that binds to the host cell entry receptors NECTIN1 and TNFRSF14/HVEM, promoting the virus entry into host cells. May trigger fusion with host membrane, by recruiting the fusion machinery composed of gB and gH/gL. This chain is Envelope glycoprotein D (gD), found in Human herpesvirus 2 (strain HG52) (HHV-2).